The primary structure comprises 266 residues: 3-deoxy-manno-octulosonate cytidylyltransferase (266 aa).

It belongs to the KdsB family.

The protein resides in the cytoplasm. It carries out the reaction 3-deoxy-alpha-D-manno-oct-2-ulosonate + CTP = CMP-3-deoxy-beta-D-manno-octulosonate + diphosphate. The protein operates within nucleotide-sugar biosynthesis; CMP-3-deoxy-D-manno-octulosonate biosynthesis; CMP-3-deoxy-D-manno-octulosonate from 3-deoxy-D-manno-octulosonate and CTP: step 1/1. It functions in the pathway bacterial outer membrane biogenesis; lipopolysaccharide biosynthesis. Functionally, activates KDO (a required 8-carbon sugar) for incorporation into bacterial lipopolysaccharide in Gram-negative bacteria. This chain is 3-deoxy-manno-octulosonate cytidylyltransferase, found in Paraburkholderia xenovorans (strain LB400).